The following is a 124-amino-acid chain: Small ribosomal subunit protein uS12 (124 aa).

Residues 1 to 25 form a disordered region; it reads MATINQLVRKPRQASTYKSASPALD.

The protein belongs to the universal ribosomal protein uS12 family. As to quaternary structure, part of the 30S ribosomal subunit. Contacts proteins S8 and S17. May interact with IF1 in the 30S initiation complex.

In terms of biological role, with S4 and S5 plays an important role in translational accuracy. Functionally, interacts with and stabilizes bases of the 16S rRNA that are involved in tRNA selection in the A site and with the mRNA backbone. Located at the interface of the 30S and 50S subunits, it traverses the body of the 30S subunit contacting proteins on the other side and probably holding the rRNA structure together. The combined cluster of proteins S8, S12 and S17 appears to hold together the shoulder and platform of the 30S subunit. The sequence is that of Small ribosomal subunit protein uS12 from Xylella fastidiosa (strain 9a5c).